A 359-amino-acid chain; its full sequence is Phosphate acyltransferase (359 aa).

The tract at residues 338–359 is disordered; sequence LEGAAGRAARPPPPRRASSHDA.

The protein belongs to the PlsX family. As to quaternary structure, homodimer. Probably interacts with PlsY.

It localises to the cytoplasm. The catalysed reaction is a fatty acyl-[ACP] + phosphate = an acyl phosphate + holo-[ACP]. It functions in the pathway lipid metabolism; phospholipid metabolism. Catalyzes the reversible formation of acyl-phosphate (acyl-PO(4)) from acyl-[acyl-carrier-protein] (acyl-ACP). This enzyme utilizes acyl-ACP as fatty acyl donor, but not acyl-CoA. The sequence is that of Phosphate acyltransferase from Anaeromyxobacter sp. (strain Fw109-5).